The chain runs to 163 residues: Cytochrome b6-f complex subunit 4 (163 aa).

A run of 3 helical transmembrane segments spans residues 36–56, 95–115, and 131–151; these read LLYI…GLAV, LLGV…PFLE, and TVFL…TLPI.

The protein belongs to the cytochrome b family. PetD subfamily. In terms of assembly, the 4 large subunits of the cytochrome b6-f complex are cytochrome b6, subunit IV (17 kDa polypeptide, petD), cytochrome f and the Rieske protein, while the 4 small subunits are petG, petL, petM and petN. The complex functions as a dimer.

The protein localises to the plastid. Its subcellular location is the chloroplast thylakoid membrane. Its function is as follows. Component of the cytochrome b6-f complex, which mediates electron transfer between photosystem II (PSII) and photosystem I (PSI), cyclic electron flow around PSI, and state transitions. The chain is Cytochrome b6-f complex subunit 4 from Drimys granadensis.